The primary structure comprises 419 residues: Serine hydroxymethyltransferase (419 aa).

Residues Leu121 and 125 to 127 (GHL) contribute to the (6S)-5,6,7,8-tetrahydrofolate site. At Lys230 the chain carries N6-(pyridoxal phosphate)lysine. Position 355–357 (355–357 (SPF)) interacts with (6S)-5,6,7,8-tetrahydrofolate.

Belongs to the SHMT family. As to quaternary structure, homodimer. The cofactor is pyridoxal 5'-phosphate.

It is found in the cytoplasm. It carries out the reaction (6R)-5,10-methylene-5,6,7,8-tetrahydrofolate + glycine + H2O = (6S)-5,6,7,8-tetrahydrofolate + L-serine. It functions in the pathway one-carbon metabolism; tetrahydrofolate interconversion. Its pathway is amino-acid biosynthesis; glycine biosynthesis; glycine from L-serine: step 1/1. Functionally, catalyzes the reversible interconversion of serine and glycine with tetrahydrofolate (THF) serving as the one-carbon carrier. This reaction serves as the major source of one-carbon groups required for the biosynthesis of purines, thymidylate, methionine, and other important biomolecules. Also exhibits THF-independent aldolase activity toward beta-hydroxyamino acids, producing glycine and aldehydes, via a retro-aldol mechanism. The sequence is that of Serine hydroxymethyltransferase from Streptococcus uberis (strain ATCC BAA-854 / 0140J).